A 562-amino-acid polypeptide reads, in one-letter code: uncharacterized protein (562 aa).

Transmembrane regions (helical) follow at residues 4-26 (VRWIISTAPEIFLLLAVAIGTML), 33-55 (GFAIGTTACILIVSVLIGQLGTF), 59-78 (ALLRIVLFSLFVFTIGYKSG), 90-112 (LAQVAMALVLGGTGLVIVLAFAF), and 159-181 (IAAGYAVTYVLGYILTLLYVPFA). 2 consecutive RCK C-terminal domains span residues 207-287 (PKTE…IIGT) and 295-375 (LKAI…QVGQ). Transmembrane regions (helical) follow at residues 385-402 (IAFLAAGIAAGLLAGLVS), 406-428 (GGIALTLGGGGGALIAGLLCGWL), 449-471 (LGLGGFIAAIGLANGHAAWVAIQ), 476-498 (LLVGMGLVVTLVPLVVATLFAYH), 505-524 (VITCGALAGAMTVDAAVTGA), and 539-561 (VPYAVGNVVLTVLGPIIVACTFV).

It belongs to the AAE transporter (TC 2.A.81) family.

The protein localises to the cell membrane. This is an uncharacterized protein from Bradyrhizobium diazoefficiens (strain JCM 10833 / BCRC 13528 / IAM 13628 / NBRC 14792 / USDA 110).